A 507-amino-acid polypeptide reads, in one-letter code: ATP synthase subunit alpha, chloroplastic (507 aa).

170-177 (GDRQTGKT) serves as a coordination point for ATP.

The protein belongs to the ATPase alpha/beta chains family. As to quaternary structure, F-type ATPases have 2 components, CF(1) - the catalytic core - and CF(0) - the membrane proton channel. CF(1) has five subunits: alpha(3), beta(3), gamma(1), delta(1), epsilon(1). CF(0) has four main subunits: a, b, b' and c.

The protein resides in the plastid. The protein localises to the chloroplast thylakoid membrane. It catalyses the reaction ATP + H2O + 4 H(+)(in) = ADP + phosphate + 5 H(+)(out). Produces ATP from ADP in the presence of a proton gradient across the membrane. The alpha chain is a regulatory subunit. This is ATP synthase subunit alpha, chloroplastic from Gossypium barbadense (Sea Island cotton).